The following is a 135-amino-acid chain: Large ribosomal subunit protein uL16c (135 aa).

Belongs to the universal ribosomal protein uL16 family. In terms of assembly, part of the 50S ribosomal subunit.

The protein localises to the plastid. The chain is Large ribosomal subunit protein uL16c from Epifagus virginiana (Beechdrops).